Here is a 292-residue protein sequence, read N- to C-terminus: MLNTAREIIDVCNERGIKIYDLVLEEEIKNSHTTEEEIRKKLDAVIDVMHASATKNLTQSDVTEYKMIDGFAKRTYEYANSGKSIVGDFLAKAMAMAFSTSEVNASMGKIVAAPTAGSSGIMPAMLVAATEKYNFDRTTIQNGFLTSIGIGQVITKYATFAGAEGGCQAECGSASAMAAAALVEMLGGTVEQALHAASITIINVLGLVCDPIAGLVQYPCTFRNASGVINAFISADLALAGVESLVPFDEVVIAMGEVGNSMIEALRETGLGGLAGSKTGQKIRRDFLKEGD.

The protein belongs to the iron-sulfur dependent L-serine dehydratase family. As to quaternary structure, heterooctamer of four alpha chains and four beta chains. [4Fe-4S] cluster is required as a cofactor.

The enzyme catalyses L-serine = pyruvate + NH4(+). It functions in the pathway carbohydrate biosynthesis; gluconeogenesis. The polypeptide is L-serine dehydratase, alpha chain (sdhA) (Peptoniphilus asaccharolyticus (Peptostreptococcus asaccharolyticus)).